We begin with the raw amino-acid sequence, 110 residues long: BolA-like protein 3 (110 aa).

Belongs to the BolA/IbaG family. In terms of assembly, interacts with NFU1.

The protein resides in the mitochondrion. In terms of biological role, acts as a mitochondrial iron-sulfur (Fe-S) cluster assembly factor that facilitates (Fe-S) cluster insertion into a subset of mitochondrial proteins. Probably acts together with NFU1. The polypeptide is BolA-like protein 3 (BOLA3) (Bos taurus (Bovine)).